The following is a 346-amino-acid chain: Deoxyhypusine hydroxylase (346 aa).

5 HEAT-like PBS-type repeats span residues 71-100 (VLLRHEVAYVIGQISNEKCNDILIKLLNDT), 104-133 (LMVRHEAAEGLAAIGSDSNIEVIKKFLNDE), 213-242 (LKLRYEALFKLRDMETDVSINALGEVLIKD), 246-275 (AIFRHEVAFVLGQALHLNSLKYLISSLQNV), and 279-320 (EMVR…SKDA). Histidine 75, histidine 108, and glutamate 109 together coordinate Fe cation. The Fe cation site is built by histidine 250, histidine 283, and glutamate 284.

This sequence belongs to the deoxyhypusine hydroxylase family. Fe(2+) is required as a cofactor.

The catalysed reaction is [eIF5A protein]-deoxyhypusine + AH2 + O2 = [eIF5A protein]-hypusine + A + H2O. It participates in protein modification; eIF5A hypusination. Functionally, catalyzes the hydroxylation of the N(6)-(4-aminobutyl)-L-lysine intermediate produced by deoxyhypusine synthase/DHPS on a critical lysine of the eukaryotic translation initiation factor 5A/eIF-5A. This is the second step of the post-translational modification of that lysine into an unusual amino acid residue named hypusine. Hypusination is unique to mature eIF-5A factor and is essential for its function. The polypeptide is Deoxyhypusine hydroxylase (Plasmodium vivax (strain Salvador I)).